The following is a 227-amino-acid chain: 2-C-methyl-D-erythritol 4-phosphate cytidylyltransferase (227 aa).

It belongs to the IspD/TarI cytidylyltransferase family. IspD subfamily.

It carries out the reaction 2-C-methyl-D-erythritol 4-phosphate + CTP + H(+) = 4-CDP-2-C-methyl-D-erythritol + diphosphate. It participates in isoprenoid biosynthesis; isopentenyl diphosphate biosynthesis via DXP pathway; isopentenyl diphosphate from 1-deoxy-D-xylulose 5-phosphate: step 2/6. Catalyzes the formation of 4-diphosphocytidyl-2-C-methyl-D-erythritol from CTP and 2-C-methyl-D-erythritol 4-phosphate (MEP). This is 2-C-methyl-D-erythritol 4-phosphate cytidylyltransferase from Lachnospira eligens (strain ATCC 27750 / DSM 3376 / VPI C15-48 / C15-B4) (Eubacterium eligens).